Here is a 249-residue protein sequence, read N- to C-terminus: Cytoplasmic envelopment protein 1 (249 aa).

The protein belongs to the herpesviridae cytoplasmic envelopment protein 1 family.

The protein localises to the virion. The protein resides in the virion tegument. It is found in the host cytoplasm. It localises to the host Golgi apparatus. Functionally, plays a critical role in cytoplasmic virus egress. Participates in the final step of tegumentation and envelope acquisition within the host cytoplasm. This is Cytoplasmic envelopment protein 1 (UL103) from Homo sapiens (Human).